Reading from the N-terminus, the 312-residue chain is HPr kinase/phosphorylase (312 aa).

Active-site residues include H139 and K160. Position 154 to 161 (154 to 161) interacts with ATP; that stretch reads GSSGVGKS. S161 contributes to the Mg(2+) binding site. The Proton acceptor; for phosphorylation activity. Proton donor; for dephosphorylation activity role is filled by D178. The segment at 202-211 is important for the catalytic mechanism of both phosphorylation and dephosphorylation; it reads LEIRGLGIIN. Residue E203 coordinates Mg(2+). R244 is an active-site residue. The interval 265-270 is important for the catalytic mechanism of dephosphorylation; it reads PVRPGR.

This sequence belongs to the HPrK/P family. As to quaternary structure, homohexamer. Requires Mg(2+) as cofactor.

It catalyses the reaction [HPr protein]-L-serine + ATP = [HPr protein]-O-phospho-L-serine + ADP + H(+). It carries out the reaction [HPr protein]-O-phospho-L-serine + phosphate + H(+) = [HPr protein]-L-serine + diphosphate. Catalyzes the ATP- as well as the pyrophosphate-dependent phosphorylation of a specific serine residue in HPr, a phosphocarrier protein of the phosphoenolpyruvate-dependent sugar phosphotransferase system (PTS). HprK/P also catalyzes the pyrophosphate-producing, inorganic phosphate-dependent dephosphorylation (phosphorolysis) of seryl-phosphorylated HPr (P-Ser-HPr). The two antagonistic activities of HprK/P are regulated by several intracellular metabolites, which change their concentration in response to the absence or presence of rapidly metabolisable carbon sources (glucose, fructose, etc.) in the growth medium. Therefore, by controlling the phosphorylation state of HPr, HPrK/P is a sensor enzyme that plays a major role in the regulation of carbon metabolism and sugar transport: it mediates carbon catabolite repression (CCR), and regulates PTS-catalyzed carbohydrate uptake and inducer exclusion. In Listeria innocua serovar 6a (strain ATCC BAA-680 / CLIP 11262), this protein is HPr kinase/phosphorylase.